The chain runs to 236 residues: Rho-related GTP-binding protein RhoV (236 aa).

The disordered stretch occupies residues Met-1–Pro-27. Residues Glu-10–Pro-20 show a composition bias toward pro residues. Ser-25 bears the Phosphoserine mark. GTP is bound by residues Gly-38–Ser-45, Asp-85–Gln-89, and Thr-143–Asp-146. Cys-234 carries S-palmitoyl cysteine lipidation.

It belongs to the small GTPase superfamily. Rho family. Interacts with PAK2. The cofactor is Mg(2+). As to expression, highly expressed in pancreas, placenta, and fetal brain.

The protein localises to the cell membrane. Its subcellular location is the endosome membrane. Functionally, plays a role in the control of the actin cytoskeleton via activation of the JNK pathway. This chain is Rho-related GTP-binding protein RhoV, found in Homo sapiens (Human).